Reading from the N-terminus, the 393-residue chain is Acetylornithine aminotransferase (393 aa).

Pyridoxal 5'-phosphate contacts are provided by residues 96 to 97 (GT) and Phe129. N(2)-acetyl-L-ornithine is bound at residue Arg132. 214-217 (DEVQ) contributes to the pyridoxal 5'-phosphate binding site. Lys243 is subject to N6-(pyridoxal phosphate)lysine. Ser271 is a binding site for N(2)-acetyl-L-ornithine. A pyridoxal 5'-phosphate-binding site is contributed by Thr272.

It belongs to the class-III pyridoxal-phosphate-dependent aminotransferase family. ArgD subfamily. In terms of assembly, homodimer. Pyridoxal 5'-phosphate serves as cofactor.

The protein localises to the cytoplasm. The enzyme catalyses N(2)-acetyl-L-ornithine + 2-oxoglutarate = N-acetyl-L-glutamate 5-semialdehyde + L-glutamate. Its pathway is amino-acid biosynthesis; L-arginine biosynthesis; N(2)-acetyl-L-ornithine from L-glutamate: step 4/4. The protein is Acetylornithine aminotransferase of Rhodobacter capsulatus (strain ATCC BAA-309 / NBRC 16581 / SB1003).